Consider the following 166-residue polypeptide: CDP-archaeol synthase (166 aa).

5 helical membrane-spanning segments follow: residues leucine 7–isoleucine 27, leucine 55–alanine 75, threonine 78–isoleucine 98, leucine 116–tyrosine 136, and phenylalanine 138–leucine 158.

The protein belongs to the CDP-archaeol synthase family. The cofactor is Mg(2+).

Its subcellular location is the cell membrane. It catalyses the reaction 2,3-bis-O-(geranylgeranyl)-sn-glycerol 1-phosphate + CTP + H(+) = CDP-2,3-bis-O-(geranylgeranyl)-sn-glycerol + diphosphate. The protein operates within membrane lipid metabolism; glycerophospholipid metabolism. Its function is as follows. Catalyzes the formation of CDP-2,3-bis-(O-geranylgeranyl)-sn-glycerol (CDP-archaeol) from 2,3-bis-(O-geranylgeranyl)-sn-glycerol 1-phosphate (DGGGP) and CTP. This reaction is the third ether-bond-formation step in the biosynthesis of archaeal membrane lipids. This Saccharolobus islandicus (strain L.S.2.15 / Lassen #1) (Sulfolobus islandicus) protein is CDP-archaeol synthase.